We begin with the raw amino-acid sequence, 201 residues long: Potassium-transporting ATPase KdpC subunit (201 aa).

Residues 12–34 (LLALTMITGLAYPLAVTGLATVL) traverse the membrane as a helical segment. Positions 73 to 102 (TVAPDPADSSKTVSAPYNAANSGGSNLGPT) are disordered. Residues 81-101 (SSKTVSAPYNAANSGGSNLGP) are compositionally biased toward polar residues.

It belongs to the KdpC family. In terms of assembly, the system is composed of three essential subunits: KdpA, KdpB and KdpC.

It localises to the cell inner membrane. Its function is as follows. Part of the high-affinity ATP-driven potassium transport (or Kdp) system, which catalyzes the hydrolysis of ATP coupled with the electrogenic transport of potassium into the cytoplasm. This subunit acts as a catalytic chaperone that increases the ATP-binding affinity of the ATP-hydrolyzing subunit KdpB by the formation of a transient KdpB/KdpC/ATP ternary complex. The polypeptide is Potassium-transporting ATPase KdpC subunit (Rhodopseudomonas palustris (strain ATCC BAA-98 / CGA009)).